Reading from the N-terminus, the 306-residue chain is Putative S-adenosyl-L-methionine-dependent methyltransferase Mvan_1345 (306 aa).

S-adenosyl-L-methionine contacts are provided by residues D134 and 163-164 (DL).

It belongs to the UPF0677 family.

In terms of biological role, exhibits S-adenosyl-L-methionine-dependent methyltransferase activity. This chain is Putative S-adenosyl-L-methionine-dependent methyltransferase Mvan_1345, found in Mycolicibacterium vanbaalenii (strain DSM 7251 / JCM 13017 / BCRC 16820 / KCTC 9966 / NRRL B-24157 / PYR-1) (Mycobacterium vanbaalenii).